The following is a 253-amino-acid chain: Phosphoadenosine 5'-phosphosulfate reductase (253 aa).

The active-site Nucleophile; cysteine thiosulfonate intermediate is the Cys239.

It belongs to the PAPS reductase family. CysH subfamily.

It localises to the cytoplasm. The catalysed reaction is [thioredoxin]-disulfide + sulfite + adenosine 3',5'-bisphosphate + 2 H(+) = [thioredoxin]-dithiol + 3'-phosphoadenylyl sulfate. It functions in the pathway sulfur metabolism; hydrogen sulfide biosynthesis; sulfite from sulfate: step 3/3. Its function is as follows. Catalyzes the formation of sulfite from phosphoadenosine 5'-phosphosulfate (PAPS) using thioredoxin as an electron donor. The protein is Phosphoadenosine 5'-phosphosulfate reductase of Photobacterium profundum (strain SS9).